Here is a 310-residue protein sequence, read N- to C-terminus: Methionyl-tRNA formyltransferase (310 aa).

108-111 (SLLP) lines the (6S)-5,6,7,8-tetrahydrofolate pocket.

This sequence belongs to the Fmt family.

It catalyses the reaction L-methionyl-tRNA(fMet) + (6R)-10-formyltetrahydrofolate = N-formyl-L-methionyl-tRNA(fMet) + (6S)-5,6,7,8-tetrahydrofolate + H(+). Its function is as follows. Attaches a formyl group to the free amino group of methionyl-tRNA(fMet). The formyl group appears to play a dual role in the initiator identity of N-formylmethionyl-tRNA by promoting its recognition by IF2 and preventing the misappropriation of this tRNA by the elongation apparatus. The chain is Methionyl-tRNA formyltransferase from Fusobacterium nucleatum subsp. nucleatum (strain ATCC 25586 / DSM 15643 / BCRC 10681 / CIP 101130 / JCM 8532 / KCTC 2640 / LMG 13131 / VPI 4355).